Reading from the N-terminus, the 212-residue chain is MFAEYGVLNYWTYLVGAIFIVLVPGPNTLFVLKNSVSSGMKGGYLAACGVFIGDAVLMFLAWAGVATLIKTTPILFNIVRYLGAFYLLYLGSKILYATLKGKNSEAKSDEPQYGAIFKRALILSLTNPKAILFYVSFFVQFIDVNAPHTGISFFILAATLELVSFCYLSFLIISGAFVTQYIRTKKKLAKVGNSLIGLMFVGFAARLATLQS.

6 consecutive transmembrane segments (helical) span residues 12–32, 49–69, 71–91, 122–142, 153–173, and 188–208; these read TYLVGAIFIVLVPGPNTLFVL, GVFIGDAVLMFLAWAGVATLI, TTPILFNIVRYLGAFYLLYLG, ILSLTNPKAILFYVSFFVQFI, FFILAATLELVSFCYLSFLII, and LAKVGNSLIGLMFVGFAARLA.

The protein belongs to the Rht family.

The protein localises to the cell inner membrane. The enzyme catalyses L-leucine(in) + H(+)(out) = L-leucine(out) + H(+)(in). With respect to regulation, leucine export is inhibited by the proton ionophore carbonyl cyanide m-chlorophenylhydrazone (CCCP). In terms of biological role, exporter of leucine. Can also transport its natural analog L-alpha-amino-n-butyric acid and some other structurally unrelated amino acids. Leucine excretion is probably driven by proton motive force. The polypeptide is Leucine efflux protein (Escherichia coli (strain K12)).